Reading from the N-terminus, the 553-residue chain is MSDIALTVSVLALVAVVGLWIGNIKVRGVGFGIGGVLFGGIIVGHFVDQAGVTLSGDMLHFIQEFGLILFVYTIGIQVGPGFFASLRVSGLRLNLFAVLIVIMGGLVTAILHKIFAIPLPVVLGIFSGAVTNTPALGAGQQILRDLGTPVDLVDQMGMSYAMAYPFGICGILLTMWLMRLIFRVNVEAEAQKHESSLANGHSLIQTMNIRVENPNLNNMAIQDVPILNSDKIICSRLKRDDTLMVPSPGTIIQAGDLLHLVGQSTDLHNAQLVIGKEVDTSLSTRGTDLRVERVVVTNEKVLGKRIRDLHFKERYDVVISRLNRAGVELVASSDASLQFGDILNLVGRPASIDAVANVVGNAQQKLQQVQMLPVFIGIGLGVLLGSIPLFVPGFPVALKLGLAGGPLIMALILGRIGSIGKLYWFMPPSANLALRELGIVLFLAVVGLKSGGDFVDTLTQGEGLSWIGYGIFITAIPLITVGLLARIFAKMNYLTLCGMLAGSMTDPPALAFANNLHATSGAAALSYATVYPLVMFLRIITPQLLAVIFWGMG.

5 helical membrane-spanning segments follow: residues Ile4–Ile24, Gly28–Asp48, Phe65–Ser85, Leu95–Phe115, and Met158–Met178. RCK C-terminal domains are found at residues Lys192–Lys276 and Asp279–Asn361. 6 helical membrane passes run Met371–Val391, Gly393–Leu413, Leu437–Thr457, Leu464–Leu484, Tyr493–Ala513, and Leu533–Gly553.

Belongs to the AAE transporter (TC 2.A.81) family. YidE subfamily.

It is found in the cell membrane. This chain is Putative transport protein YidE, found in Salmonella newport (strain SL254).